We begin with the raw amino-acid sequence, 68 residues long: Large ribosomal subunit protein uL29 (68 aa).

This sequence belongs to the universal ribosomal protein uL29 family.

The sequence is that of Large ribosomal subunit protein uL29 from Bradyrhizobium diazoefficiens (strain JCM 10833 / BCRC 13528 / IAM 13628 / NBRC 14792 / USDA 110).